The primary structure comprises 185 residues: Ribosome-recycling factor (185 aa).

It belongs to the RRF family.

It is found in the cytoplasm. Its function is as follows. Responsible for the release of ribosomes from messenger RNA at the termination of protein biosynthesis. May increase the efficiency of translation by recycling ribosomes from one round of translation to another. This is Ribosome-recycling factor from Bacillus cytotoxicus (strain DSM 22905 / CIP 110041 / 391-98 / NVH 391-98).